The primary structure comprises 172 residues: Shikimate kinase (172 aa).

11 to 16 contributes to the ATP binding site; that stretch reads GSGKTT. Thr15 contributes to the Mg(2+) binding site. Residues Asp33, Arg57, and Gly79 each coordinate substrate. An ATP-binding site is contributed by Arg117. Arg136 serves as a coordination point for substrate.

It belongs to the shikimate kinase family. In terms of assembly, monomer. The cofactor is Mg(2+).

It localises to the cytoplasm. The catalysed reaction is shikimate + ATP = 3-phosphoshikimate + ADP + H(+). It functions in the pathway metabolic intermediate biosynthesis; chorismate biosynthesis; chorismate from D-erythrose 4-phosphate and phosphoenolpyruvate: step 5/7. Catalyzes the specific phosphorylation of the 3-hydroxyl group of shikimic acid using ATP as a cosubstrate. This chain is Shikimate kinase, found in Caldicellulosiruptor saccharolyticus (strain ATCC 43494 / DSM 8903 / Tp8T 6331).